Reading from the N-terminus, the 118-residue chain is Small ribosomal subunit protein uS13 (118 aa).

Residues 94-118 are disordered; the sequence is SLPLRGQRTKTNARTRKGPRKPIRK.

This sequence belongs to the universal ribosomal protein uS13 family. In terms of assembly, part of the 30S ribosomal subunit. Forms a loose heterodimer with protein S19. Forms two bridges to the 50S subunit in the 70S ribosome.

Located at the top of the head of the 30S subunit, it contacts several helices of the 16S rRNA. In the 70S ribosome it contacts the 23S rRNA (bridge B1a) and protein L5 of the 50S subunit (bridge B1b), connecting the 2 subunits; these bridges are implicated in subunit movement. Contacts the tRNAs in the A and P-sites. The sequence is that of Small ribosomal subunit protein uS13 from Shewanella woodyi (strain ATCC 51908 / MS32).